We begin with the raw amino-acid sequence, 248 residues long: UDP-2,3-diacylglucosamine hydrolase (248 aa).

The Mn(2+) site is built by aspartate 8, histidine 10, aspartate 41, asparagine 79, and histidine 114. Position 79-80 (asparagine 79–arginine 80) interacts with substrate. Aspartate 122, serine 160, aspartate 171, and histidine 202 together coordinate substrate. Mn(2+) is bound by residues histidine 202 and histidine 204.

This sequence belongs to the LpxH family. Requires Mn(2+) as cofactor.

The protein localises to the cell inner membrane. The enzyme catalyses UDP-2-N,3-O-bis[(3R)-3-hydroxytetradecanoyl]-alpha-D-glucosamine + H2O = 2-N,3-O-bis[(3R)-3-hydroxytetradecanoyl]-alpha-D-glucosaminyl 1-phosphate + UMP + 2 H(+). The protein operates within glycolipid biosynthesis; lipid IV(A) biosynthesis; lipid IV(A) from (3R)-3-hydroxytetradecanoyl-[acyl-carrier-protein] and UDP-N-acetyl-alpha-D-glucosamine: step 4/6. Its function is as follows. Hydrolyzes the pyrophosphate bond of UDP-2,3-diacylglucosamine to yield 2,3-diacylglucosamine 1-phosphate (lipid X) and UMP by catalyzing the attack of water at the alpha-P atom. Involved in the biosynthesis of lipid A, a phosphorylated glycolipid that anchors the lipopolysaccharide to the outer membrane of the cell. This is UDP-2,3-diacylglucosamine hydrolase from Stenotrophomonas maltophilia (strain R551-3).